A 403-amino-acid chain; its full sequence is Eukaryotic initiation factor 4A (403 aa).

The interval 1-20 (MDDRNEIPQDGPASMEPEGV) is disordered. The Q motif motif lies at 30–58 (DNFDDMNLREELLRGIYGYGFEKPSAIQQ). The Helicase ATP-binding domain maps to 61-231 (IIPCVRGRDV…RCFMRDPVSI (171 aa)). 74-81 (AQSGTGKT) contributes to the ATP binding site. The DEAD box signature appears at 179–182 (DEAD). A Helicase C-terminal domain is found at 242-403 (GIKQFYVNVK…EMPANIADLI (162 aa)).

Belongs to the DEAD box helicase family. eIF4A subfamily. As to quaternary structure, eIF4F is a multi-subunit complex, the composition of which varies with external and internal environmental conditions. It is composed of at least eIF4A, eIF4E1 and eIF4G1. Interacts with tud and vas. Interacts (via multiple contacts) with bam; the interaction is direct.

The protein localises to the cytoplasm. It is found in the cytoplasmic ribonucleoprotein granule. The enzyme catalyses ATP + H2O = ADP + phosphate + H(+). In terms of biological role, ATP-dependent RNA helicase which is a subunit of the eIF4F complex involved in cap recognition and is required for mRNA binding to ribosome. In the current model of translation initiation, eIF4A unwinds RNA secondary structures in the 5'-UTR of mRNAs which is necessary to allow efficient binding of the small ribosomal subunit, and subsequent scanning for the initiator codon. As a result, promotes cell proliferation and growth. Binds and antagonises the bam-bgcn complex; probably prevents bam mediated translational repression of shg/E-cadherin. Involved in germ cell formation. Involved in germline stem cell maintenance and proliferation; prevents differentiation. The protein is Eukaryotic initiation factor 4A of Drosophila melanogaster (Fruit fly).